The chain runs to 468 residues: Sorting and assembly machinery component 50 homolog A (468 aa).

The tract at residues 1-24 is disordered; the sequence is MGTVHARSLDPLPMNGPDFGSPDD. In terms of domain architecture, POTRA spans 44 to 124; sequence VVVQRVHFEG…LDVTFEVTEL (81 aa).

The protein belongs to the SAM50/omp85 family. In terms of assembly, associates with the mitochondrial contact site and cristae organizing system (MICOS) complex (also known as MINOS or MitOS complex).

The protein localises to the mitochondrion outer membrane. May play a role in the maintenance of the structure of mitochondrial cristae. The chain is Sorting and assembly machinery component 50 homolog A (samm50-a) from Xenopus laevis (African clawed frog).